The sequence spans 395 residues: Argininosuccinate synthase (395 aa).

ATP-binding positions include Ala10–Ser18 and Ala37. L-citrulline is bound by residues Tyr88 and Ser93. ATP is bound at residue Gly118. L-aspartate-binding residues include Thr120, Asn124, and Asp125. Asn124 provides a ligand contact to L-citrulline. Positions 128, 179, 188, 264, and 276 each coordinate L-citrulline.

This sequence belongs to the argininosuccinate synthase family. Type 1 subfamily. Homotetramer.

The protein resides in the cytoplasm. It carries out the reaction L-citrulline + L-aspartate + ATP = 2-(N(omega)-L-arginino)succinate + AMP + diphosphate + H(+). The protein operates within amino-acid biosynthesis; L-arginine biosynthesis; L-arginine from L-ornithine and carbamoyl phosphate: step 2/3. This Pelagibacter ubique (strain HTCC1062) protein is Argininosuccinate synthase.